A 168-amino-acid polypeptide reads, in one-letter code: Acetone carboxylase gamma subunit (168 aa).

Heterohexamer of two alpha, two beta and two gamma subunits. The cofactor is Fe cation. Requires Mg(2+) as cofactor. Zn(2+) is required as a cofactor.

It carries out the reaction acetone + hydrogencarbonate + 2 ATP + 3 H2O = acetoacetate + 2 AMP + 4 phosphate + 4 H(+). Functionally, catalyzes the carboxylation of acetone to form acetoacetate. Has a reduced activity on butanone, and no activity on 2-pentatone, 3-pentatone, 2-hexanone, chloroacetone, pyruvate, phosphoenolpyruvate, acetaldehyde, propionaldehyde and propylene oxide. In Xanthobacter autotrophicus (strain ATCC BAA-1158 / Py2), this protein is Acetone carboxylase gamma subunit.